The sequence spans 519 residues: 3-octaprenyl-4-hydroxybenzoate carboxy-lyase (519 aa).

Asn-177 lines the Mn(2+) pocket. Residues 180–182 (IYR), 194–196 (RWL), and 199–200 (RG) each bind prenylated FMN. Glu-243 contributes to the Mn(2+) binding site. Catalysis depends on Asp-318, which acts as the Proton donor.

Belongs to the UbiD family. As to quaternary structure, homohexamer. Prenylated FMN serves as cofactor. The cofactor is Mn(2+).

It localises to the cell membrane. The catalysed reaction is a 4-hydroxy-3-(all-trans-polyprenyl)benzoate + H(+) = a 2-(all-trans-polyprenyl)phenol + CO2. It functions in the pathway cofactor biosynthesis; ubiquinone biosynthesis. Functionally, catalyzes the decarboxylation of 3-octaprenyl-4-hydroxy benzoate to 2-octaprenylphenol, an intermediate step in ubiquinone biosynthesis. In Burkholderia thailandensis (strain ATCC 700388 / DSM 13276 / CCUG 48851 / CIP 106301 / E264), this protein is 3-octaprenyl-4-hydroxybenzoate carboxy-lyase.